We begin with the raw amino-acid sequence, 354 residues long: tRNA-specific 2-thiouridylase MnmA (354 aa).

ATP contacts are provided by residues 7 to 14 (AMSGGVDS) and M33. The active-site Nucleophile is C94. Cysteines 94 and 192 form a disulfide. An ATP-binding site is contributed by G118. The tract at residues 141-143 (KDQ) is interaction with tRNA. Residue C192 is the Cysteine persulfide intermediate of the active site. Residues 296-297 (RY) are interaction with tRNA.

The protein belongs to the MnmA/TRMU family.

It localises to the cytoplasm. The catalysed reaction is S-sulfanyl-L-cysteinyl-[protein] + uridine(34) in tRNA + AH2 + ATP = 2-thiouridine(34) in tRNA + L-cysteinyl-[protein] + A + AMP + diphosphate + H(+). Functionally, catalyzes the 2-thiolation of uridine at the wobble position (U34) of tRNA, leading to the formation of s(2)U34. In Trichlorobacter lovleyi (strain ATCC BAA-1151 / DSM 17278 / SZ) (Geobacter lovleyi), this protein is tRNA-specific 2-thiouridylase MnmA.